Reading from the N-terminus, the 284-residue chain is Efem/EfeO family lipoprotein (284 aa).

Residues 1–17 (MKKLTTLLLASTLLIAA) form the signal peptide. The N-palmitoyl cysteine moiety is linked to residue Cys-18. Cys-18 carries the S-diacylglycerol cysteine lipid modification.

The protein belongs to the EfeM/EfeO family.

It is found in the cell membrane. This is Efem/EfeO family lipoprotein from Staphylococcus aureus (strain USA300).